The chain runs to 1392 residues: DNA-directed RNA polymerase subunit beta'' (1392 aa).

The Zn(2+) site is built by C224, C295, C302, and C305.

Belongs to the RNA polymerase beta' chain family. RpoC2 subfamily. In plastids the minimal PEP RNA polymerase catalytic core is composed of four subunits: alpha, beta, beta', and beta''. When a (nuclear-encoded) sigma factor is associated with the core the holoenzyme is formed, which can initiate transcription. Zn(2+) serves as cofactor.

The protein localises to the plastid. It localises to the chloroplast. It carries out the reaction RNA(n) + a ribonucleoside 5'-triphosphate = RNA(n+1) + diphosphate. Functionally, DNA-dependent RNA polymerase catalyzes the transcription of DNA into RNA using the four ribonucleoside triphosphates as substrates. The polypeptide is DNA-directed RNA polymerase subunit beta'' (Eucalyptus globulus subsp. globulus (Tasmanian blue gum)).